Consider the following 103-residue polypeptide: Large ribosomal subunit protein bL21 (103 aa).

Belongs to the bacterial ribosomal protein bL21 family. In terms of assembly, part of the 50S ribosomal subunit. Contacts protein L20.

In terms of biological role, this protein binds to 23S rRNA in the presence of protein L20. This Shewanella baltica (strain OS223) protein is Large ribosomal subunit protein bL21.